We begin with the raw amino-acid sequence, 523 residues long: DNA-directed RNA polymerase subunit Rpo2N (523 aa).

Residues 501–523 (SSMGVEGIPGISMETTSTTSADD) form a disordered region. The segment covering 513–523 (METTSTTSADD) has biased composition (polar residues).

It belongs to the RNA polymerase beta chain family. Part of the RNA polymerase complex.

It localises to the cytoplasm. The enzyme catalyses RNA(n) + a ribonucleoside 5'-triphosphate = RNA(n+1) + diphosphate. In terms of biological role, DNA-dependent RNA polymerase (RNAP) catalyzes the transcription of DNA into RNA using the four ribonucleoside triphosphates as substrates. The Rpo2 subunit (Rpo2N and Rpo2C in this organism) is implicated in DNA promoter recognition and in nucleotide binding. The protein is DNA-directed RNA polymerase subunit Rpo2N of Halobacterium salinarum (strain ATCC 29341 / DSM 671 / R1).